The primary structure comprises 255 residues: 5'-nucleotidase SurE (255 aa).

A divalent metal cation is bound by residues aspartate 8, aspartate 9, serine 40, and asparagine 93.

The protein belongs to the SurE nucleotidase family. A divalent metal cation serves as cofactor.

The protein resides in the cytoplasm. It catalyses the reaction a ribonucleoside 5'-phosphate + H2O = a ribonucleoside + phosphate. Nucleotidase that shows phosphatase activity on nucleoside 5'-monophosphates. The polypeptide is 5'-nucleotidase SurE (Nitrobacter winogradskyi (strain ATCC 25391 / DSM 10237 / CIP 104748 / NCIMB 11846 / Nb-255)).